Here is a 2475-residue protein sequence, read N- to C-terminus: Non-reducing polyketide synthase prhL (2475 aa).

An N-terminal acylcarrier protein transacylase domain (SAT) region spans residues 14 to 253 (VLFGSKYSEI…HHADHLSAAQ (240 aa)). Positions 384 to 800 (SIPIAVTGLA…GSNAAIVLKE (417 aa)) constitute a Ketosynthase family 3 (KS3) domain. Catalysis depends on for beta-ketoacyl synthase activity residues cysteine 549, histidine 684, and histidine 723. The malonyl-CoA:ACP transacylase (MAT) domain stretch occupies residues 910–1212 (LCFGGQTGNK…CPMDLSGPQA (303 aa)). The For acyl/malonyl transferase activity role is filled by serine 997. Residues 1279–1407 (EGLKLVQLLK…GTISLSPGAN (129 aa)) are N-terminal hotdog fold. Residues 1279–1586 (EGLKLVQLLK…FTSVSIQSLR (308 aa)) enclose the PKS/mFAS DH domain. The interval 1282–1585 (KLVQLLKNEG…TFTSVSIQSL (304 aa)) is product template (PT) domain. The active-site Proton acceptor; for dehydratase activity is histidine 1312. The interval 1435 to 1586 (SSSGLKRSTV…FTSVSIQSLR (152 aa)) is C-terminal hotdog fold. Aspartate 1493 acts as the Proton donor; for dehydratase activity in catalysis. Residues 1626-1703 (SSNGDDLRTV…ALVQRIFPGR (78 aa)) form the Carrier domain. Serine 1663 is subject to O-(pantetheine 4'-phosphoryl)serine. The segment at 1865-2098 (HHTSEHKLLH…GFNWVDWTDN (234 aa)) is methyltransferase (CMeT) domain. The tract at residues 2127-2475 (SDIHEETVVY…YEFLRSHVRL (349 aa)) is thioesterase (TE) domain. Catalysis depends on for thioesterase activity residues serine 2250 and aspartate 2412.

The enzyme catalyses 3 malonyl-CoA + acetyl-CoA + 2 S-adenosyl-L-methionine = 3,5-dimethylorsellinate + 2 S-adenosyl-L-homocysteine + 3 CO2 + 4 CoA. The protein operates within secondary metabolite biosynthesis; terpenoid biosynthesis. Functionally, non-reducing polyketide synthase; part of the gene cluster that mediates the biosynthesis of paraherquonin, a meroterpenoid with a unique, highly congested hexacyclic molecular architecture. The first step of the pathway is the synthesis of 3,5-dimethylorsellinic acid (DMOA) by the polyketide synthase prhL. Synthesis of DMOA is followed by farnesylation by the prenyltransferase prhE, methylesterification by the methyl-transferase prhM, epoxidation of the prenyl chain by the flavin-dependent monooxygenase prhF, and cyclization of the farnesyl moiety by the terpene cyclase prhH, to yield the tetracyclic intermediate, protoaustinoid A. The short chain dehydrogenase prhI then oxidizes the C-3 alcohol group of the terpene cyclase product to transform protoaustinoid A into protoaustinoid B. The FAD-binding monooxygenase prhJ catalyzes the oxidation of protoaustinoid B into preaustinoid A which is further oxidized into preaustinoid A1 by FAD-binding monooxygenase phrK. Finally, prhA leads to berkeleydione via the berkeleyone B intermediate. PrhA is a multifunctional dioxygenase that first desaturates at C5-C6 to form berkeleyone B, followed by rearrangement of the A/B-ring to form the cycloheptadiene moiety in berkeleydione. Berkeleydione serves as the key intermediate for the biosynthesis of paraherquonin as well as many other meroterpenoids. The cytochrome P450 monooxygenases prhB, prhD, and prhN, as well as the isomerase prhC, are probably involved in the late stage of paraherquonin biosynthesis, after the production of berkeleydione. Especially prhC might be a multifunctional enzyme that catalyzes the D-ring expansion via intramolecular methoxy rearrangement, as well as the hydrolysis of the expanded D-ring. The chain is Non-reducing polyketide synthase prhL from Penicillium brasilianum.